We begin with the raw amino-acid sequence, 412 residues long: Na(+)/H(+) antiporter NhaA 1 (412 aa).

10 helical membrane-spanning segments follow: residues 34–54 (VGGM…NSPA), 75–95 (LTIG…VAGL), 114–134 (LPVV…FAIG), 142–162 (AAWA…LSLT), 183–203 (LGAI…LALL), 234–254 (WIAV…LGLL), 282–302 (LIVP…EALV), 309–329 (VAIA…FGSS), 349–369 (LSAL…IAEL), and 379–399 (AKAA…VMLL).

Belongs to the NhaA Na(+)/H(+) (TC 2.A.33) antiporter family.

Its subcellular location is the cell membrane. It carries out the reaction Na(+)(in) + 2 H(+)(out) = Na(+)(out) + 2 H(+)(in). In terms of biological role, na(+)/H(+) antiporter that extrudes sodium in exchange for external protons. This chain is Na(+)/H(+) antiporter NhaA 1, found in Saccharopolyspora erythraea (strain ATCC 11635 / DSM 40517 / JCM 4748 / NBRC 13426 / NCIMB 8594 / NRRL 2338).